A 202-amino-acid polypeptide reads, in one-letter code: Nascent polypeptide-associated complex subunit alpha (202 aa).

The segment covering 1 to 19 (MADPRVEELPDEEVPKTNV) has biased composition (basic and acidic residues). The disordered stretch occupies residues 1 to 42 (MADPRVEELPDEEVPKTNVEDAGSSSESEAGDEPTIPGGAAV). The NAC-A/B domain maps to 46 to 111 (SRNEKKARKA…AKIEDLNATA (66 aa)). Over residues 117 to 126 (QQLAEAAANE) the composition is skewed to low complexity. Residues 117-165 (QQLAEAAANEHAGHDHEHDHGKGKAPEAEAKKEEEEDDGEEVDESGLEA) are disordered. The span at 127–149 (HAGHDHEHDHGKGKAPEAEAKKE) shows a compositional bias: basic and acidic residues. The segment covering 150–162 (EEEDDGEEVDESG) has biased composition (acidic residues). Residues 163–202 (LEAKDIELVMAQANVSRKKAVKALRENDNDIVNSIMALSI) enclose the UBA domain.

It belongs to the NAC-alpha family. Part of the nascent polypeptide-associated complex (NAC), consisting of egd2 and egd1. NAC associates with ribosomes via egd1.

It localises to the cytoplasm. It is found in the nucleus. Component of the nascent polypeptide-associated complex (NAC), a dynamic component of the ribosomal exit tunnel, protecting the emerging polypeptides from interaction with other cytoplasmic proteins to ensure appropriate nascent protein targeting. The NAC complex also promotes mitochondrial protein import by enhancing productive ribosome interactions with the outer mitochondrial membrane and blocks the inappropriate interaction of ribosomes translating non-secretory nascent polypeptides with translocation sites in the membrane of the endoplasmic reticulum. Egd2 may also be involved in transcription regulation. This Aspergillus niger (strain ATCC MYA-4892 / CBS 513.88 / FGSC A1513) protein is Nascent polypeptide-associated complex subunit alpha (egd2).